A 368-amino-acid chain; its full sequence is 3-dehydroquinate synthase (368 aa).

NAD(+) is bound by residues 69-74, 103-107, 127-128, K140, and K149; these read DGEAYK, GVIGD, and TT. Zn(2+) contacts are provided by E182, H245, and H262.

The protein belongs to the sugar phosphate cyclases superfamily. Dehydroquinate synthase family. Co(2+) is required as a cofactor. It depends on Zn(2+) as a cofactor. The cofactor is NAD(+).

The protein localises to the cytoplasm. The catalysed reaction is 7-phospho-2-dehydro-3-deoxy-D-arabino-heptonate = 3-dehydroquinate + phosphate. Its pathway is metabolic intermediate biosynthesis; chorismate biosynthesis; chorismate from D-erythrose 4-phosphate and phosphoenolpyruvate: step 2/7. Its function is as follows. Catalyzes the conversion of 3-deoxy-D-arabino-heptulosonate 7-phosphate (DAHP) to dehydroquinate (DHQ). This is 3-dehydroquinate synthase from Pseudomonas aeruginosa (strain UCBPP-PA14).